An 82-amino-acid polypeptide reads, in one-letter code: MKLTCVMIVAVLFLTTWTFVTADDSRYGLKNLFPKARHEMKNPEASKLNKRDGCSSGGTFCGIHPGLCCSEFCFLWCITFID.

An N-terminal signal peptide occupies residues 1–22 (MKLTCVMIVAVLFLTTWTFVTA). Residues 23 to 51 (DDSRYGLKNLFPKARHEMKNPEASKLNKR) constitute a propeptide that is removed on maturation. 3 disulfide bridges follow: cysteine 54/cysteine 69, cysteine 61/cysteine 73, and cysteine 68/cysteine 77. Proline 65 carries the post-translational modification 4-hydroxyproline.

The protein belongs to the conotoxin O1 superfamily. As to expression, expressed by the venom duct.

The protein localises to the secreted. Functionally, delta-conotoxins bind to site 6 of voltage-gated sodium channels (Nav) and inhibit the inactivation process. Impairs rapid channel inactivation of Nav1.4/SCN4A (Kd=500 nM). Interacts with a conserved hydrophobic triad (YFV) in the domain-4 voltage sensor of sodium channels. In vivo, injection of both native or synthetic peptide induces twitching of back limbs, running in circles, and spastic paralysis. The protein is Delta-conotoxin SVIE (SO6) of Conus striatus (Striated cone).